The following is a 343-amino-acid chain: SUMO-activating enzyme subunit aos-1 (343 aa).

Belongs to the ubiquitin-activating E1 family. In terms of assembly, heterodimer of aos-1 and uba-2.

Its pathway is protein modification; protein sumoylation. The dimeric enzyme acts as an E1 ligase for smo-1. It mediates ATP-dependent activation of smo-1 and formation of a thioester with a conserved cysteine residue on uba-2. This is SUMO-activating enzyme subunit aos-1 (aos-1) from Caenorhabditis elegans.